We begin with the raw amino-acid sequence, 272 residues long: Shikimate dehydrogenase (NADP(+)) (272 aa).

Shikimate-binding positions include 20-22 (TMS) and T67. K71 serves as the catalytic Proton acceptor. Residue E83 participates in NADP(+) binding. Shikimate contacts are provided by N92 and D107. NADP(+)-binding positions include 129–133 (GAGGA), 153–158 (NRTKSK), and L216. Y218 provides a ligand contact to shikimate. G239 serves as a coordination point for NADP(+).

It belongs to the shikimate dehydrogenase family. In terms of assembly, homodimer.

It catalyses the reaction shikimate + NADP(+) = 3-dehydroshikimate + NADPH + H(+). It participates in metabolic intermediate biosynthesis; chorismate biosynthesis; chorismate from D-erythrose 4-phosphate and phosphoenolpyruvate: step 4/7. Functionally, involved in the biosynthesis of the chorismate, which leads to the biosynthesis of aromatic amino acids. Catalyzes the reversible NADPH linked reduction of 3-dehydroshikimate (DHSA) to yield shikimate (SA). The sequence is that of Shikimate dehydrogenase (NADP(+)) from Maridesulfovibrio salexigens (strain ATCC 14822 / DSM 2638 / NCIMB 8403 / VKM B-1763) (Desulfovibrio salexigens).